Consider the following 490-residue polypeptide: Tegument protein VP16 (490 aa).

Residues 12-35 (MNADGASPPPPRPAGGPKNTPAAP) form a disordered region. Residues Ser-18, Ser-353, Ser-411, and Ser-452 each carry the phosphoserine modification. Positions 411 to 490 (STAPPTDVSL…DALGIDEYGG (80 aa)) are transcriptional activation.

The protein belongs to the herpesviridae tegument protein VP16 protein family. Interacts with tegument protein VP22. Interacts with gH (via C-terminus). Interacts with the virion host shutoff protein (vhs). Interacts with VP11/12. Associates with the VP16-induced complex; binding to host HCFC1 activates VP16 for association with the octamer motif-binding host protein POU2F1, to form a multiprotein-DNA complex responsible for activating transcription of the viral immediate early genes. Interacts with host P-TEFb; this interaction recruits P-TEFb to the viral alpha-gene promoters and overcomes transcriptional inhibition by ICP22 and promotes transcription of IE genes.

It localises to the virion tegument. It is found in the host nucleus. Its function is as follows. In the early stage of viral replication, acts as a transcriptional activator of immediate-early (IE) gene products (alpha-genes), which is released by invading virions. Recruits P-TEFb to the viral alpha-gene promoters and overcomes transcriptional inhibition by ICP22 to promote transcription of IE genes. VP16-induced complex represents a regulatory switch: when it is on, it promotes IE-gene expression and thus lytic infection, and when it is off, it limits IE-gene transcription favoring latent infection. Acts as a key activator of lytic infection by initiating the lytic program through the assembly of the transcriptional regulatory VP16-induced complex composed of VP16 and two cellular factors, HCFC1 and POU2F1. This complex recognizes the core motif 'TAATGARAT' in alpha-gene promoters. In the late stage of viral replication, VP16, as a tegument, is involved in viral assembly. Functionally, may play a role in the aggregation of tegument proteins around nucleocapsids during virus morphogenesis. In Human herpesvirus 1 (strain 17) (HHV-1), this protein is Tegument protein VP16.